A 229-amino-acid chain; its full sequence is Glutamine amidotransferase-like class 1 domain-containing protein 1 (229 aa).

An N-terminal signal peptide occupies residues 1-34; that stretch reads MKKQGAPVSGGGTERLTKPSCLMVGSAVAEGVSA. N-linked (GlcNAc...) asparagine glycans are attached at residues asparagine 154 and asparagine 212.

The protein belongs to the peptidase C56 family. Homotetramer. Component of the FERRY complex.

It localises to the secreted. Its subcellular location is the early endosome. Its function is as follows. Component of the FERRY complex (Five-subunit Endosomal Rab5 and RNA/ribosome intermediary). The FERRY complex directly interacts with mRNAs and RAB5A, and functions as a RAB5A effector involved in the localization and the distribution of specific mRNAs most likely by mediating their endosomal transport. The complex recruits mRNAs and ribosomes to early endosomes through direct mRNA-interaction. This is Glutamine amidotransferase-like class 1 domain-containing protein 1 from Xenopus laevis (African clawed frog).